The chain runs to 201 residues: Prostamide/prostaglandin F synthase (201 aa).

The protein belongs to the peroxiredoxin-like PRXL2 family. Prostamide/prostaglandin F synthase subfamily.

It is found in the cytoplasm. Its subcellular location is the cytosol. The enzyme catalyses prostaglandin H2 + [thioredoxin]-dithiol = prostaglandin F2alpha + [thioredoxin]-disulfide. The catalysed reaction is prostamide F2alpha + [thioredoxin]-disulfide = prostamide H2 + [thioredoxin]-dithiol. Functionally, catalyzes the reduction of prostaglandin-ethanolamide H(2) (prostamide H(2)) to prostamide F(2alpha) with NADPH as proton donor. Also able to reduce prostaglandin H(2) to prostaglandin F(2alpha). This is Prostamide/prostaglandin F synthase (prxl2b) from Aquarana catesbeiana (American bullfrog).